The sequence spans 204 residues: uncharacterized protein (204 aa).

The Acyl-thioester intermediate role is filled by Cys-52. Catalysis depends on residues His-89 and Asp-104.

It belongs to the arylamine N-acetyltransferase family.

This is an uncharacterized protein from Acanthamoeba polyphaga mimivirus (APMV).